The primary structure comprises 592 residues: Membrane protein insertase YidC (592 aa).

5 helical membrane-spanning segments follow: residues 8 to 28 (LFIALGLILVILTGYQMFVMG), 363 to 385 (ALGQFGLAILALTLMVKIVMFPL), 430 to 450 (INPLAGCLPILPQIPIFFALY), 493 to 513 (IWLIGGVLGIGAWPIIMGLTM), and 531 to 551 (IFAFLPIVFTFILAPFAAGLV).

The protein belongs to the OXA1/ALB3/YidC family. Type 1 subfamily. As to quaternary structure, interacts with the Sec translocase complex via SecD. Specifically interacts with transmembrane segments of nascent integral membrane proteins during membrane integration.

The protein localises to the cell inner membrane. Its function is as follows. Required for the insertion and/or proper folding and/or complex formation of integral membrane proteins into the membrane. Involved in integration of membrane proteins that insert both dependently and independently of the Sec translocase complex, as well as at least some lipoproteins. Aids folding of multispanning membrane proteins. The chain is Membrane protein insertase YidC from Maricaulis maris (strain MCS10) (Caulobacter maris).